We begin with the raw amino-acid sequence, 178 residues long: GTP-dependent dephospho-CoA kinase (178 aa).

GTP is bound by residues aspartate 55, valine 57, aspartate 74, lysine 76, and glutamate 127.

This sequence belongs to the GTP-dependent DPCK family.

The enzyme catalyses 3'-dephospho-CoA + GTP = GDP + CoA + H(+). It participates in cofactor biosynthesis; coenzyme A biosynthesis. In terms of biological role, catalyzes the GTP-dependent phosphorylation of the 3'-hydroxyl group of dephosphocoenzyme A to form coenzyme A (CoA). The protein is GTP-dependent dephospho-CoA kinase of Saccharolobus islandicus (strain Y.N.15.51 / Yellowstone #2) (Sulfolobus islandicus).